The chain runs to 271 residues: Cytochrome b termination protein 1 (271 aa).

The protein localises to the mitochondrion. Its function is as follows. Involved in 5'-end processing of mitochondrial COB, 15S rRNA, and RPM1 transcript. May also have a role in 3'-end processing of the COB pre-mRNA. The sequence is that of Cytochrome b termination protein 1 (CBT1) from Saccharomyces cerevisiae (strain ATCC 204508 / S288c) (Baker's yeast).